We begin with the raw amino-acid sequence, 185 residues long: Deoxyuridine 5'-triphosphate nucleotidohydrolase (185 aa).

Positions 1–23 are disordered; it reads MSHLQAHMQRNNKESHSLSPFSQ. Substrate is bound by residues 95 to 97, Asn-108, 112 to 114, and Lys-122; these read RSG and TID. The disordered stretch occupies residues 160 to 185; it reads DQKDSSQTPSNEGSRGADGFGSTGHD. Residues 175-185 are compositionally biased toward gly residues; the sequence is GADGFGSTGHD.

This sequence belongs to the dUTPase family. Mg(2+) is required as a cofactor.

It catalyses the reaction dUTP + H2O = dUMP + diphosphate + H(+). It participates in pyrimidine metabolism; dUMP biosynthesis; dUMP from dCTP (dUTP route): step 2/2. In terms of biological role, this enzyme is involved in nucleotide metabolism: it produces dUMP, the immediate precursor of thymidine nucleotides and it decreases the intracellular concentration of dUTP so that uracil cannot be incorporated into DNA. This chain is Deoxyuridine 5'-triphosphate nucleotidohydrolase, found in Bartonella quintana (strain Toulouse) (Rochalimaea quintana).